The sequence spans 248 residues: MEQFKGLQKTLYIWTDSADLDKRVEKVKSATGGEVALENVHRLSFSSYANSSFDLIVIECAQLTDNYVKLLHMLKPSGKLHLVAFIGPAGSLLQEVKLSGFINCREDADDALTAEKPGYETGSSARLSFAKKDASALNVWKISGDDEELIDEEDLLDEEDKQKPDPAGLRVCSTTGKRKACKNCSCGLAEELESEKQSKAATENAKSSCGNCYLGDAFRCSTCPYLGMPAFKPGEKVQLADNLLKSDI.

The segment at 4 to 129 (FKGLQKTLYI…ETGSSARLSF (126 aa)) is N-terminal SAM-like domain. A linker region spans residues 130 to 161 (AKKDASALNVWKISGDDEELIDEEDLLDEEDK). [2Fe-2S] cluster is bound by residues Cys172, Cys181, Cys184, and Cys186. Positions 172–186 (CSTTGKRKACKNCSC) are fe-S binding site A. 4 residues coordinate [4Fe-4S] cluster: Cys209, Cys212, Cys220, and Cys223. Short sequence motifs (cx2C motif) lie at residues 209–212 (CGNC) and 220–223 (CSTC). A fe-S binding site B region spans residues 209 to 223 (CGNCYLGDAFRCSTC).

It belongs to the anamorsin family. Monomer. Requires [2Fe-2S] cluster as cofactor. The cofactor is [4Fe-4S] cluster.

It localises to the cytoplasm. The protein localises to the mitochondrion intermembrane space. Its function is as follows. Component of the cytosolic iron-sulfur (Fe-S) protein assembly (CIA) machinery. Required for the maturation of extramitochondrial Fe-S proteins. Part of an electron transfer chain functioning in an early step of cytosolic Fe-S biogenesis, facilitating the de novo assembly of a [4Fe-4S] cluster on the cytosolic Fe-S scaffold complex. Electrons are transferred from NADPH via a FAD- and FMN-containing diflavin oxidoreductase. Together with the diflavin oxidoreductase, also required for the assembly of the diferric tyrosyl radical cofactor of ribonucleotide reductase (RNR), probably by providing electrons for reduction during radical cofactor maturation in the catalytic small subunit. This is Anamorsin homolog from Drosophila ananassae (Fruit fly).